We begin with the raw amino-acid sequence, 673 residues long: F-box/LRR-repeat protein 17 (673 aa).

The tract at residues 1-39 (MGHVAPHASKKEHVAPHAAEKDHVAPHASKKEHVAPHAA) is disordered. Basic and acidic residues predominate over residues 9–39 (SKKEHVAPHAAEKDHVAPHASKKEHVAPHAA). The F-box domain maps to 291–338 (PLHINQLPSSLLLKIFSNLSLNERCILASLVCKYWRDLCLDSQFWKQL).

Belongs to the FBXL17 family. Part of the SCF (SKP1-CUL1-F-box) E3 ubiquitin-protein ligase complex SCF(FBXL17). Interacts with BTB domain-containing proteins; specifically recognizes and binds a conserved degron of non-consecutive residues present at the interface of BTB dimers of aberrant composition. In terms of tissue distribution, expressed in the neuro-ectoderm of embryos.

It localises to the cytoplasm. Its subcellular location is the nucleus. Its function is as follows. Substrate-recognition component of the SCF(FBXL17) E3 ubiquitin ligase complex, a key component of a quality control pathway required to ensure functional dimerization of BTB domain-containing proteins (dimerization quality control, DQC). FBXL17 specifically recognizes and binds a conserved degron of non-consecutive residues present at the interface of BTB dimers of aberrant composition: aberrant BTB dimer are then ubiquitinated by the SCF(FBXL17) complex and degraded by the proteasome. The ability of the SCF(FBXL17) complex to eliminate compromised BTB dimers is required for the differentiation and survival of neural crest and neuronal cells. This is F-box/LRR-repeat protein 17 from Xenopus laevis (African clawed frog).